The following is a 418-amino-acid chain: CinA-like protein (418 aa).

It belongs to the CinA family.

In Cyanothece sp. (strain PCC 7425 / ATCC 29141), this protein is CinA-like protein.